Consider the following 115-residue polypeptide: Large ribosomal subunit protein bL20c (115 aa).

The protein belongs to the bacterial ribosomal protein bL20 family.

It localises to the plastid. The protein localises to the chloroplast. In terms of biological role, binds directly to 23S ribosomal RNA and is necessary for the in vitro assembly process of the 50S ribosomal subunit. It is not involved in the protein synthesizing functions of that subunit. This Nymphaea alba (White water-lily) protein is Large ribosomal subunit protein bL20c.